Here is a 967-residue protein sequence, read N- to C-terminus: Nonsense-mediated mRNA decay factor SMG8 (967 aa).

Residues 627-702 (LNEGEDADAD…SCPESQSVAS (76 aa)) form a disordered region. Positions 628 to 639 (NEGEDADADADS) are enriched in acidic residues. A compositionally biased stretch (low complexity) spans 643–666 (RSQICSSGQSSRSRSNSSSSDTSS). Positions 686-702 (ATEALSESCPESQSVAS) are enriched in polar residues.

The protein belongs to the SMG8 family.

In terms of biological role, involved in nonsense-mediated decay (NMD) of mRNAs containing premature stop codons. Probable component of kinase complex containing nonC and recruited to stalled ribosomes. In Drosophila mojavensis (Fruit fly), this protein is Nonsense-mediated mRNA decay factor SMG8.